Here is a 483-residue protein sequence, read N- to C-terminus: Myosin-binding protein H (483 aa).

Polar residues predominate over residues 1 to 15 (MTGKATSEASVSTPE). The segment at 1-78 (MTGKATSEAS…PEPPSEDVPS (78 aa)) is disordered. Residues Thr-2, Thr-6, and Thr-26 each carry the phosphothreonine modification. Residues 41–66 (QEQAPEPQKPQAQDPAAPAASAMPAA) are compositionally biased toward low complexity. Residues 79-174 (APLRLTLEDV…LDQPVHIQEI (96 aa)) enclose the Fibronectin type-III 1 domain. An Ig-like C2-type 1 domain is found at 178-266 (PKIRVPRHLR…EGLEAKASID (89 aa)). The 96-residue stretch at 275 to 370 (PPSSIKLLDV…TKELAHIHKA (96 aa)) folds into the Fibronectin type-III 2 domain. The 85-residue stretch at 388–472 (PSFTQPLADH…INVLGEASVD (85 aa)) folds into the Ig-like C2-type 2 domain.

It belongs to the immunoglobulin superfamily. MyBP family. Skeletal muscle. Expressed at low levels in heart ventricles.

Functionally, binds to myosin; probably involved in interaction with thick myofilaments in the A-band. This chain is Myosin-binding protein H (Mybph), found in Mus musculus (Mouse).